A 263-amino-acid chain; its full sequence is Probable esterase PIR7A (263 aa).

S82 functions as the Acyl-ester intermediate in the catalytic mechanism. Catalysis depends on charge relay system residues D213 and H241.

It belongs to the AB hydrolase superfamily.

The sequence is that of Probable esterase PIR7A (PIR7A) from Oryza sativa subsp. indica (Rice).